The sequence spans 304 residues: MLFEQIAANKRKTVFIILGFFIFVLMVGAAIGIIVWNNYLNGLILAAAIGAVYILIMVMSSSSVVMAMNHAKEVTSKEQAPVLWDTVESMAMVAGIPMPKVYIVEDPSPNAFATGISPEKGAVAVTRGLLNKLERYELEGVIAHEISHIRNYDIRLSTIAIALVAVIAILSDLAMRLIFWGSLTGGRNSRKSDNNNGGGAQIIIYVVALIFVILAPIIATAIQFALSRNREYLADASAVELTRNPDGLIQALQKISGDTKKMEEVSASSESIYFSSPLKSKKDKPGLFDSHPPISSRIERLENM.

The next 2 helical transmembrane spans lie at 14–34 (VFIILGFFIFVLMVGAAIGII) and 39–59 (YLNGLILAAAIGAVYILIMVM). His144 contacts Zn(2+). Glu145 is an active-site residue. His148 contacts Zn(2+). Transmembrane regions (helical) follow at residues 159–179 (IAIALVAVIAILSDLAMRLIF) and 202–222 (IIIYVVALIFVILAPIIATAI). Glu231 contacts Zn(2+). The tract at residues 275–304 (SSPLKSKKDKPGLFDSHPPISSRIERLENM) is disordered.

The protein belongs to the peptidase M48B family. Zn(2+) serves as cofactor.

Its subcellular location is the cell membrane. This Listeria innocua serovar 6a (strain ATCC BAA-680 / CLIP 11262) protein is Protease HtpX homolog.